The primary structure comprises 228 residues: Large ribosomal subunit protein uL3 (228 aa).

Residues methionine 135–aspartate 159 are disordered. A compositionally biased stretch (polar residues) spans alanine 140–valine 150. An N5-methylglutamine modification is found at glutamine 158.

It belongs to the universal ribosomal protein uL3 family. As to quaternary structure, part of the 50S ribosomal subunit. Forms a cluster with proteins L14 and L19. Post-translationally, methylated by PrmB.

Its function is as follows. One of the primary rRNA binding proteins, it binds directly near the 3'-end of the 23S rRNA, where it nucleates assembly of the 50S subunit. The chain is Large ribosomal subunit protein uL3 from Albidiferax ferrireducens (strain ATCC BAA-621 / DSM 15236 / T118) (Rhodoferax ferrireducens).